The primary structure comprises 641 residues: Single-strand DNA endonuclease 1 (641 aa).

The tract at residues 1–90 (MGVKNLWDIL…SLKLATYRRR (90 aa)) is N-domain. Residues 2-97 (GVKNLWDILE…RRRLGSISHA (96 aa)) form an XPG-N domain region. Residues Asp30, Asp76, Glu144, Glu146, Asp165, Asp167, and Asp217 each coordinate Mg(2+). The tract at residues 132–217 (MALGIPCLDG…ISLAVLLGSD (86 aa)) is XPG-I domain. I-domain stretches follow at residues 132–220 (MALG…DYSN) and 132–221 (MALG…YSNG). The segment at 217 to 350 (DYSNGVNGFG…ILPKIAEREL (134 aa)) is 5'-3' exonuclease domain. Disordered stretches follow at residues 428–448 (KGEEKKQKRRARPKKSGQAAV) and 572–615 (VGSH…RVHH). Residues 580-590 (DGGGGGGGGVA) are compositionally biased toward gly residues.

The protein belongs to the XPG/RAD2 endonuclease family. GEN subfamily. Requires Mg(2+) as cofactor. As to expression, highly expressed in shoot apical meristem (SAM) and young leaves. Expressed in roots, flag leaf and panicles.

Its subcellular location is the nucleus. Single-stranded DNA endonuclease activity in vitro. May not be active as double-stranded DNA endonuclease. Endonuclease which cleaves flap structures at the junction between single-stranded DNA and double-stranded DNA with a specific cleavage site in the 5' overhang strand exactly one nucleotide 3' of the branch point. Structure- and sequence-specific nuclease that resolves holliday junctions (HJs) by symmetrically oriented incisions in two opposing strands near the junction point, thus leading to ligatable products; HJs are physical links between homologous DNA molecules that arise as central intermediary structures during homologous recombination and repair in meiotic and somatic cells. Probably involved in the resolution of toxic replication structures to ensure genome stability, and to maintain telomere integrity and replication. The sequence is that of Single-strand DNA endonuclease 1 from Oryza sativa subsp. japonica (Rice).